We begin with the raw amino-acid sequence, 938 residues long: Isoleucine--tRNA ligase (938 aa).

The 'HIGH' region signature appears at 58–68 (PYANGSIHIGH). K183 carries the N6-acetyllysine modification. Position 561 (E561) interacts with L-isoleucyl-5'-AMP. The 'KMSKS' region motif lies at 602–606 (KMSKS). K605 contributes to the ATP binding site. Residues C901, C904, C921, and C924 each contribute to the Zn(2+) site.

The protein belongs to the class-I aminoacyl-tRNA synthetase family. IleS type 1 subfamily. As to quaternary structure, monomer. Zn(2+) serves as cofactor.

It localises to the cytoplasm. It carries out the reaction tRNA(Ile) + L-isoleucine + ATP = L-isoleucyl-tRNA(Ile) + AMP + diphosphate. Functionally, catalyzes the attachment of isoleucine to tRNA(Ile). As IleRS can inadvertently accommodate and process structurally similar amino acids such as valine, to avoid such errors it has two additional distinct tRNA(Ile)-dependent editing activities. One activity is designated as 'pretransfer' editing and involves the hydrolysis of activated Val-AMP. The other activity is designated 'posttransfer' editing and involves deacylation of mischarged Val-tRNA(Ile). This is Isoleucine--tRNA ligase from Shigella flexneri.